Here is a 242-residue protein sequence, read N- to C-terminus: GLIPR1-like protein 1 (242 aa).

The first 22 residues, 1-22 (MALKNKFSCLWILGLCLVATTS), serve as a signal peptide directing secretion. Residues 39–171 (EAHNEWRGKV…ASTAIFVCNY (133 aa)) enclose the SCP domain. Asn119 is a glycosylation site (N-linked (GlcNAc...) asparagine). Residue Gly221 is the site of GPI-anchor amidated glycine attachment. Positions 222–242 (RAPQQTAFNPFSLGFLLLRIF) are cleaved as a propeptide — removed in mature form.

The protein belongs to the CRISP family. In terms of assembly, part of a oolemmal binding multimeric complex (IZUMO1 complex) composed at least of IZUMO1 and GLIPR1L1; the complex assemblage is influenced by the maturation status of the male germ cell. Interacts with IZUMO1. In terms of processing, N-glycosylated. N-glycosylation decreases during the transit in the caput. Highly expressed in testis.

Its subcellular location is the cytoplasmic vesicle. The protein resides in the secretory vesicle. It is found in the acrosome. It localises to the cell membrane. The protein localises to the membrane raft. Its subcellular location is the secreted. In terms of biological role, required for optimal fertilization at the stage of sperm-oocyte fusion, plays a role in optimizing acrosome function, the translocation of IZUMO1 during the acrosome reaction and the fertilization process. Component of epididymosomes, one type of membranous microvesicules which mediate the transfer of lipids and proteins to spermatozoa plasma membrane during epididymal maturation. Also component of the CD9-positive microvesicules found in the cauda region. This Homo sapiens (Human) protein is GLIPR1-like protein 1 (GLIPR1L1).